A 254-amino-acid polypeptide reads, in one-letter code: 5-oxoprolinase subunit A (254 aa).

Belongs to the LamB/PxpA family. In terms of assembly, forms a complex composed of PxpA, PxpB and PxpC.

It carries out the reaction 5-oxo-L-proline + ATP + 2 H2O = L-glutamate + ADP + phosphate + H(+). In terms of biological role, catalyzes the cleavage of 5-oxoproline to form L-glutamate coupled to the hydrolysis of ATP to ADP and inorganic phosphate. This is 5-oxoprolinase subunit A from Burkholderia lata (strain ATCC 17760 / DSM 23089 / LMG 22485 / NCIMB 9086 / R18194 / 383).